The primary structure comprises 364 residues: MASIFPSRRVRRTPFSAGVEAAGVKGYTVYNHMLLPTVFDSLQADCAHLKEHVQVWDVACERQVSIQGPDALRLMKLISPRDMDRMADDQCYYVPTVDHRGGMLNDPVAVKLAADHYWLSLADGDLLQFGLGIAIARGFDVEIVEPDVSPLAVQGPRADDLMARVFGEAVRDIRFFRYKRLAFQGVELVVARSGWSKQGGFEIYVEGSELGMPLWNALFAAGADLNVRAGCPNNIERVESGLLSYGNDMTRENTPYECGLGKFCNSPEDYIGKAALAEQAKNGPARQIRALVIGGEIPPCQDAWPLLADGRQVGQVGSAIHSPEFGVNVAIGMVDRSHWAPGTGMEVETPDGMRPVTVREGFWR.

The protein belongs to the GcvT family. DmdA subfamily.

It catalyses the reaction S,S-dimethyl-beta-propiothetin + (6S)-5,6,7,8-tetrahydrofolate = 3-(methylsulfanyl)propanoate + (6S)-5-methyl-5,6,7,8-tetrahydrofolate + H(+). Its function is as follows. Involved in the assimilation of dimethylsulphoniopropionate (DMSP), an important compound in the fixation of carbon in marine phytoplankton, by mediating demethylation of dimethylsulfoniopropionate (DMSP) to methyl-mercaptopropionate (MMPA). The intracellular concentration of DMSP is estimated to be 70 mM. In Ruegeria pomeroyi (strain ATCC 700808 / DSM 15171 / DSS-3) (Silicibacter pomeroyi), this protein is Dimethylsulfoniopropionate demethylase DmdA.